The primary structure comprises 33 residues: Dermaseptin-H9 (33 aa).

Leucine amide is present on leucine 33.

It belongs to the frog skin active peptide (FSAP) family. Dermaseptin subfamily. Expressed by the skin glands.

The protein resides in the secreted. In terms of biological role, has antimicrobial activity. In Pithecopus hypochondrialis (Orange-legged leaf frog), this protein is Dermaseptin-H9.